The primary structure comprises 469 residues: Argininosuccinate lyase (469 aa).

Belongs to the lyase 1 family. Argininosuccinate lyase subfamily.

The protein resides in the cytoplasm. It carries out the reaction 2-(N(omega)-L-arginino)succinate = fumarate + L-arginine. Its pathway is amino-acid biosynthesis; L-arginine biosynthesis; L-arginine from L-ornithine and carbamoyl phosphate: step 3/3. In Saccharophagus degradans (strain 2-40 / ATCC 43961 / DSM 17024), this protein is Argininosuccinate lyase.